We begin with the raw amino-acid sequence, 203 residues long: Small ribosomal subunit protein uS4c (203 aa).

Residues 15–43 (LGSLPGLTSKRPRSGSDLRNQSRSGKRSQ) are disordered. The 81-residue stretch at 89–169 (MRLDNILFRL…LPKHLTLHSL (81 aa)) folds into the S4 RNA-binding domain.

This sequence belongs to the universal ribosomal protein uS4 family. As to quaternary structure, part of the 30S ribosomal subunit. Contacts protein S5. The interaction surface between S4 and S5 is involved in control of translational fidelity.

The protein localises to the plastid. It is found in the chloroplast. Functionally, one of the primary rRNA binding proteins, it binds directly to 16S rRNA where it nucleates assembly of the body of the 30S subunit. Its function is as follows. With S5 and S12 plays an important role in translational accuracy. The sequence is that of Small ribosomal subunit protein uS4c (rps4) from Illicium oligandrum (Star anise).